Reading from the N-terminus, the 210-residue chain is Peptidyl-tRNA hydrolase (210 aa).

Residue tyrosine 14 coordinates tRNA. Histidine 19 functions as the Proton acceptor in the catalytic mechanism. The tRNA site is built by phenylalanine 64, asparagine 66, and asparagine 112.

This sequence belongs to the PTH family. In terms of assembly, monomer.

It localises to the cytoplasm. The enzyme catalyses an N-acyl-L-alpha-aminoacyl-tRNA + H2O = an N-acyl-L-amino acid + a tRNA + H(+). Functionally, hydrolyzes ribosome-free peptidyl-tRNAs (with 1 or more amino acids incorporated), which drop off the ribosome during protein synthesis, or as a result of ribosome stalling. In terms of biological role, catalyzes the release of premature peptidyl moieties from peptidyl-tRNA molecules trapped in stalled 50S ribosomal subunits, and thus maintains levels of free tRNAs and 50S ribosomes. This chain is Peptidyl-tRNA hydrolase, found in Methylorubrum extorquens (strain CM4 / NCIMB 13688) (Methylobacterium extorquens).